The chain runs to 211 residues: Arginine exporter protein ArgO (211 aa).

6 consecutive transmembrane segments (helical) span residues 1 to 21, 37 to 57, 68 to 88, 111 to 131, 147 to 167, and 179 to 199; these read MISY…PLGP, LMIA…GIFG, LLAL…FGAL, IIAT…DTFV, WFAL…ALLA, and AQRI…FQLA.

This sequence belongs to the LysE/ArgO transporter (TC 2.A.75) family.

Its subcellular location is the cell inner membrane. The catalysed reaction is L-arginine(in) = L-arginine(out). Involved in the export of arginine. Important to control the intracellular level of arginine and the correct balance between arginine and lysine. The protein is Arginine exporter protein ArgO of Salmonella paratyphi C (strain RKS4594).